Reading from the N-terminus, the 270-residue chain is Centromere protein Q (270 aa).

The interval 1–59 is disordered; the sequence is MSGKANTSKKKSQRVKRNVKQRADKEDEELDSPENKVGNRAKRNRSHAGHLSSKEQTKC. Composition is skewed to basic residues over residues 7–20 and 39–48; these read TSKK…RNVK and NRAKRNRSHA. Ser-52 is subject to Phosphoserine. A coiled-coil region spans residues 143–205; the sequence is LKVEREQERA…EEEMKEVFHI (63 aa).

The protein belongs to the CENP-Q/OKP1 family. In terms of assembly, component of the CENPA-CAD complex, composed of CENPI, CENPK, CENPL, CENPO, CENPP, CENPQ, CENPR and CENPS. The CENPA-CAD complex interacts with the CENPA-NAC complex, at least composed of CENPA, CENPC, CENPH, CENPM, CENPN, CENPT and CENPU. Post-translationally, phosphorylation at Ser-52 is essential for CENPE recruitment to kinetochores and orderly chromosome congression.

The protein resides in the nucleus. The protein localises to the chromosome. Its subcellular location is the centromere. In terms of biological role, component of the CENPA-CAD (nucleosome distal) complex, a complex recruited to centromeres which is involved in assembly of kinetochore proteins, mitotic progression and chromosome segregation. May be involved in incorporation of newly synthesized CENPA into centromeres via its interaction with the CENPA-NAC complex. Plays an important role in chromosome congression and in the recruitment of CENP-O complex (which comprises CENPO, CENPP, CENPQ and CENPU), CENPE and PLK1 to the kinetochores. This chain is Centromere protein Q (Cenpq), found in Rattus norvegicus (Rat).